The following is a 716-amino-acid chain: Amino-acid acetyltransferase, mitochondrial (716 aa).

The transit peptide at 1–44 (MSLHTGWPRTVNSSFLKKHRSSLCTCQHTSSVLPRSFSTTPDRH) directs the protein to the mitochondrion. The segment covering 37-56 (FSTTPDRHVQQSADFSSTSR) has biased composition (polar residues). Disordered regions lie at residues 37–58 (FSTTPDRHVQQSADFSSTSRSY) and 96–121 (KAQHPKSPDANKPEPEKSATAPTLPS). Residues 101–112 (KSPDANKPEPEK) show a composition bias toward basic and acidic residues. Residues 537 to 706 (SRPRLKLDDP…YEAVCRSIQP (170 aa)) enclose the N-acetyltransferase domain.

Belongs to the acetyltransferase family.

Its subcellular location is the mitochondrion. The catalysed reaction is L-glutamate + acetyl-CoA = N-acetyl-L-glutamate + CoA + H(+). The protein operates within amino-acid biosynthesis; L-arginine biosynthesis; N(2)-acetyl-L-ornithine from L-glutamate: step 1/4. In terms of biological role, N-acetylglutamate synthase involved in arginine biosynthesis. This is Amino-acid acetyltransferase, mitochondrial (arg2) from Aspergillus fumigatus (strain CBS 144.89 / FGSC A1163 / CEA10) (Neosartorya fumigata).